The sequence spans 33 residues: MSDIN-like toxin proprotein 5 (33 aa).

Positions 1–10 are excised as a propeptide; it reads MSDINATRLP. Residues 11–18 constitute a cross-link (cyclopeptide (Ile-Pro)); the sequence is IFWFIYFP. Positions 19 to 32 are excised as a propeptide; that stretch reads CVGDNVDNTLTRGE.

This sequence belongs to the MSDIN fungal toxin family. Processed by the macrocyclase-peptidase enzyme POPB to yield a toxic cyclic octapeptide. POPB first removes 10 residues from the N-terminus. Conformational trapping of the remaining peptide forces the enzyme to release this intermediate rather than proceed to macrocyclization. The enzyme rebinds the remaining peptide in a different conformation and catalyzes macrocyclization of the N-terminal 8 residues.

Functionally, probable toxin that belongs to the MSDIN-like toxin family responsible for a large number of food poisoning cases and deaths. The protein is MSDIN-like toxin proprotein 5 of Amanita phalloides (Death cap).